A 458-amino-acid polypeptide reads, in one-letter code: RuvB-like helicase 1 (458 aa).

Residues 1 to 29 (MVQISEVKGNSRDNRTAAHTHIKGLGLRP) form a disordered region. ATP is bound at residue 71 to 78 (GGPGTGKT).

This sequence belongs to the RuvB family. May form heterododecamers with RVB2. Component of the SWR1 chromatin remodeling complex, the INO80 chromatin remodeling complex, and of the R2TP complex.

Its subcellular location is the nucleus. It carries out the reaction ATP + H2O = ADP + phosphate + H(+). In terms of biological role, DNA helicase which participates in several chromatin remodeling complexes, including the SWR1 and the INO80 complexes. The SWR1 complex mediates the ATP-dependent exchange of histone H2A for the H2A variant HZT1 leading to transcriptional regulation of selected genes by chromatin remodeling. The INO80 complex remodels chromatin by shifting nucleosomes and is involved in DNA repair. Also involved in pre-rRNA processing. The sequence is that of RuvB-like helicase 1 (rvb1) from Emericella nidulans (strain FGSC A4 / ATCC 38163 / CBS 112.46 / NRRL 194 / M139) (Aspergillus nidulans).